Here is a 337-residue protein sequence, read N- to C-terminus: Cytoskeleton protein RodZ (337 aa).

The Cytoplasmic portion of the chain corresponds to 1-111 (MNTEATHDQN…LGKRRKKRDG (111 aa)). The HTH cro/C1-type domain maps to 19-71 (LRNAREQLGLSQQAVAERLCLKVSTVRDIEEDKAPADLASTFLRGYIRSYARL). The H-T-H motif DNA-binding region spans 30-49 (QQAVAERLCLKVSTVRDIEE). The chain crosses the membrane as a helical; Signal-anchor for type II membrane protein span at residues 112 to 132 (WLMTFTWLVLFVVIGLSGAWW). The Periplasmic portion of the chain corresponds to 133–337 (WQDHKAQQEE…TLNAEQSPAQ (205 aa)). Polar residues predominate over residues 145–167 (TMADQSSAELSSNSEQGQSVPLN). The tract at residues 145–218 (TMADQSSAEL…AVVSPSQANV (74 aa)) is disordered. The segment covering 168 to 207 (TSTTTDPATTSTPPASVDTTATNTQTPAVTAPAPAVDPQQ) has biased composition (low complexity). Over residues 208–218 (NAVVSPSQANV) the composition is skewed to polar residues.

It belongs to the RodZ family.

Its subcellular location is the cell inner membrane. In terms of biological role, cytoskeletal protein that is involved in cell-shape control through regulation of the length of the long axis. The protein is Cytoskeleton protein RodZ of Shigella flexneri serotype 5b (strain 8401).